Consider the following 126-residue polypeptide: Flagellar assembly factor FliW (126 aa).

Belongs to the FliW family. Interacts with translational regulator CsrA and flagellin(s).

It is found in the cytoplasm. Functionally, acts as an anti-CsrA protein, binds CsrA and prevents it from repressing translation of its target genes, one of which is flagellin. Binds to flagellin and participates in the assembly of the flagellum. The chain is Flagellar assembly factor FliW from Sulfurimonas denitrificans (strain ATCC 33889 / DSM 1251) (Thiomicrospira denitrificans (strain ATCC 33889 / DSM 1251)).